We begin with the raw amino-acid sequence, 642 residues long: Threonine--tRNA ligase (642 aa).

The TGS domain maps to 1 to 61; the sequence is MPVIRFYDGS…REDAFIEFVD (61 aa). The interval 243–534 is catalytic; the sequence is DHRKIGKFLQ…LIEECSGNLP (292 aa). Cysteine 334, histidine 385, and histidine 511 together coordinate Zn(2+).

This sequence belongs to the class-II aminoacyl-tRNA synthetase family. Homodimer. Requires Zn(2+) as cofactor.

The protein localises to the cytoplasm. It carries out the reaction tRNA(Thr) + L-threonine + ATP = L-threonyl-tRNA(Thr) + AMP + diphosphate + H(+). Functionally, catalyzes the attachment of threonine to tRNA(Thr) in a two-step reaction: L-threonine is first activated by ATP to form Thr-AMP and then transferred to the acceptor end of tRNA(Thr). Also edits incorrectly charged L-seryl-tRNA(Thr). This is Threonine--tRNA ligase from Buchnera aphidicola subsp. Acyrthosiphon pisum (strain 5A).